A 187-amino-acid polypeptide reads, in one-letter code: UPF0301 protein YqgE (187 aa).

Belongs to the UPF0301 (AlgH) family.

This is UPF0301 protein YqgE from Salmonella paratyphi B (strain ATCC BAA-1250 / SPB7).